Consider the following 444-residue polypeptide: Tubulin beta-9 chain (444 aa).

Glutamine 11, glutamate 69, serine 138, glycine 142, threonine 143, glycine 144, asparagine 204, and asparagine 226 together coordinate GTP. Glutamate 69 is a Mg(2+) binding site.

It belongs to the tubulin family. As to quaternary structure, dimer of alpha and beta chains. A typical microtubule is a hollow water-filled tube with an outer diameter of 25 nm and an inner diameter of 15 nM. Alpha-beta heterodimers associate head-to-tail to form protofilaments running lengthwise along the microtubule wall with the beta-tubulin subunit facing the microtubule plus end conferring a structural polarity. Microtubules usually have 13 protofilaments but different protofilament numbers can be found in some organisms and specialized cells. Interacts with TFCA. Mg(2+) is required as a cofactor.

The protein localises to the cytoplasm. Its subcellular location is the cytoskeleton. In terms of biological role, tubulin is the major constituent of microtubules, a cylinder consisting of laterally associated linear protofilaments composed of alpha- and beta-tubulin heterodimers. Microtubules grow by the addition of GTP-tubulin dimers to the microtubule end, where a stabilizing cap forms. Below the cap, tubulin dimers are in GDP-bound state, owing to GTPase activity of alpha-tubulin. In Arabidopsis thaliana (Mouse-ear cress), this protein is Tubulin beta-9 chain (TUBB9).